A 1436-amino-acid polypeptide reads, in one-letter code: Gag-Pol polyprotein (1436 aa).

A lipid anchor (N-myristoyl glycine; by host) is attached at Gly-2. The interaction with Gp41 stretch occupies residues 7–31 (VLSGGKLDKWEKIRLRPRGKKRYKL). The segment at 8–43 (LSGGKLDKWEKIRLRPRGKKRYKLKHIVWASRELER) is interaction with host CALM1. The interaction with host AP3D1 stretch occupies residues 12 to 19 (KLDKWEKI). The segment at 14–33 (DKWEKIRLRPRGKKRYKLKH) is interaction with membrane phosphatidylinositol 4,5-bisphosphate and RNA. Positions 16–22 (WEKIRLR) match the Nuclear export signal motif. Positions 26-32 (KKRYKLK) match the Nuclear localization signal motif. The tract at residues 73–77 (EELKS) is interaction with membrane phosphatidylinositol 4,5-bisphosphate. The segment at 106–128 (EEQNKSKKKAQQAAADTGNGSQV) is disordered. Tyr-132 bears the Phosphotyrosine; by host mark. The interaction with human PPIA/CYPA and NUP153 stretch occupies residues 189 to 227 (NTVGGHQAAMQMLKETINEEAAEWDRLHPVHAGPIAPGQ). The interval 277–363 (YSPISILDIR…GGPSHKARIL (87 aa)) is dimerization/Multimerization of capsid protein p24. CCHC-type zinc fingers lie at residues 390 to 407 (VKCFNCGKVGHIAKNCRA) and 411 to 428 (KGCWKCGKEGHQMKDCTN). A disordered region spans residues 446-465 (KARELSSEQTRANSPTRREL). The dimerization of protease stretch occupies residues 490 to 494 (PQITL). The 70-residue stretch at 509-578 (KEALLDTGAD…TPVNIIGRNL (70 aa)) folds into the Peptidase A2 domain. Asp-514 serves as the catalytic For protease activity; shared with dimeric partner. Dimerization of protease regions lie at residues 538–544 (GIGGFIK) and 577–589 (NLLTQIGCTLNFP). A Reverse transcriptase domain is found at 632 to 822 (EGKISKIGPE…PPFLWMGYEL (191 aa)). Residues Asp-698, Asp-773, and Asp-774 each contribute to the Mg(2+) site. The RT 'primer grip' stretch occupies residues 815-823 (FLWMGYELH). The Tryptophan repeat motif motif lies at 986-1002 (WEAWWTEYWQATWIPEW). In terms of domain architecture, RNase H type-1 spans 1022-1145 (IIGAETFYVD…VDRLVSTGIR (124 aa)). 4 residues coordinate Mg(2+): Asp-1031, Glu-1066, Asp-1086, and Asp-1137. The Integrase-type zinc finger occupies 1151–1192 (DGIDKAQDEHEKYHSNWRAMASDFNLPPVVAKEIVASCDKCQ). Residues His-1160, His-1164, Cys-1188, and Cys-1191 each contribute to the Zn(2+) site. The 151-residue stretch at 1202–1352 (VDCSPGIWQL…SAGERIVDII (151 aa)) folds into the Integrase catalytic domain. 3 residues coordinate Mg(2+): Asp-1212, Asp-1264, and Glu-1300. The integrase-type DNA-binding region spans 1371–1418 (FRVYYRDSRDPLWKGHAKLLWKGEGAVVIQDNSDIKVVPRRKAKIIRD).

Homotrimer; further assembles as hexamers of trimers. Interacts with gp41 (via C-terminus). Interacts with host CALM1; this interaction induces a conformational change in the Matrix protein, triggering exposure of the myristate group. Interacts with host AP3D1; this interaction allows the polyprotein trafficking to multivesicular bodies during virus assembly. Part of the pre-integration complex (PIC) which is composed of viral genome, matrix protein, Vpr and integrase. As to quaternary structure, homodimer; the homodimer further multimerizes as homohexamers or homopentamers. Interacts with human PPIA/CYPA; This interaction stabilizes the capsid. Interacts with human NUP153. Interacts with host PDZD8; this interaction stabilizes the capsid. Interacts with monkey TRIM5; this interaction destabilizes the capsid. In terms of assembly, homodimer, whose active site consists of two apposed aspartic acid residues. Heterodimer of p66 RT and p51 RT (RT p66/p51). Heterodimerization of RT is essential for DNA polymerase activity. The overall folding of the subdomains is similar in p66 RT and p51 RT but the spatial arrangements of the subdomains are dramatically different. As to quaternary structure, homotetramer; may further associate as a homohexadecamer. Part of the pre-integration complex (PIC) which is composed of viral genome, matrix protein, Vpr and integrase. Interacts with human SMARCB1/INI1 and human PSIP1/LEDGF isoform 1. Interacts with human KPNA3; this interaction might play a role in nuclear import of the pre-integration complex. Interacts with human NUP153; this interaction might play a role in nuclear import of the pre-integration complex. The cofactor is Mg(2+). Post-translationally, specific enzymatic cleavages by the viral protease yield mature proteins. The protease is released by autocatalytic cleavage. The polyprotein is cleaved during and after budding, this process is termed maturation. Proteolytic cleavage of p66 RT removes the RNase H domain to yield the p51 RT subunit. Nucleocapsid protein p7 might be further cleaved after virus entry. In terms of processing, tyrosine phosphorylated presumably in the virion by a host kinase. Phosphorylation is apparently not a major regulator of membrane association. Phosphorylated possibly by host MAPK1; this phosphorylation is necessary for Pin1-mediated virion uncoating. Post-translationally, methylated by host PRMT6, impairing its function by reducing RNA annealing and the initiation of reverse transcription.

It is found in the host cell membrane. The protein resides in the host endosome. It localises to the host multivesicular body. Its subcellular location is the virion membrane. The protein localises to the host nucleus. It is found in the host cytoplasm. The protein resides in the virion. The enzyme catalyses Specific for a P1 residue that is hydrophobic, and P1' variable, but often Pro.. The catalysed reaction is Endohydrolysis of RNA in RNA/DNA hybrids. Three different cleavage modes: 1. sequence-specific internal cleavage of RNA. Human immunodeficiency virus type 1 and Moloney murine leukemia virus enzymes prefer to cleave the RNA strand one nucleotide away from the RNA-DNA junction. 2. RNA 5'-end directed cleavage 13-19 nucleotides from the RNA end. 3. DNA 3'-end directed cleavage 15-20 nucleotides away from the primer terminus.. It carries out the reaction 3'-end directed exonucleolytic cleavage of viral RNA-DNA hybrid.. It catalyses the reaction DNA(n) + a 2'-deoxyribonucleoside 5'-triphosphate = DNA(n+1) + diphosphate. With respect to regulation, protease: The viral protease is inhibited by many synthetic protease inhibitors (PIs), such as amprenavir, atazanavir, indinavir, loprinavir, nelfinavir, ritonavir and saquinavir. Use of protease inhibitors in tritherapy regimens permit more ambitious therapeutic strategies. Reverse transcriptase/ribonuclease H: RT can be inhibited either by nucleoside RT inhibitors (NRTIs) or by non nucleoside RT inhibitors (NNRTIs). NRTIs act as chain terminators, whereas NNRTIs inhibit DNA polymerization by binding a small hydrophobic pocket near the RT active site and inducing an allosteric change in this region. Classical NRTIs are abacavir, adefovir (PMEA), didanosine (ddI), lamivudine (3TC), stavudine (d4T), tenofovir (PMPA), zalcitabine (ddC), and zidovudine (AZT). Classical NNRTIs are atevirdine (BHAP U-87201E), delavirdine, efavirenz (DMP-266), emivirine (I-EBU), and nevirapine (BI-RG-587). The tritherapies used as a basic effective treatment of AIDS associate two NRTIs and one NNRTI. Its function is as follows. Mediates, with Gag polyprotein, the essential events in virion assembly, including binding the plasma membrane, making the protein-protein interactions necessary to create spherical particles, recruiting the viral Env proteins, and packaging the genomic RNA via direct interactions with the RNA packaging sequence (Psi). Gag-Pol polyprotein may regulate its own translation, by the binding genomic RNA in the 5'-UTR. At low concentration, the polyprotein would promote translation, whereas at high concentration, the polyprotein would encapsidate genomic RNA and then shut off translation. Targets the polyprotein to the plasma membrane via a multipartite membrane-binding signal, that includes its myristoylated N-terminus. Matrix protein is part of the pre-integration complex. Implicated in the release from host cell mediated by Vpu. Binds to RNA. In terms of biological role, forms the conical core that encapsulates the genomic RNA-nucleocapsid complex in the virion. Most core are conical, with only 7% tubular. The core is constituted by capsid protein hexamer subunits. The core is disassembled soon after virion entry. Host restriction factors such as TRIM5-alpha or TRIMCyp bind retroviral capsids and cause premature capsid disassembly, leading to blocks in reverse transcription. Capsid restriction by TRIM5 is one of the factors which restricts HIV-1 to the human species. Host PIN1 apparently facilitates the virion uncoating. On the other hand, interactions with PDZD8 or CYPA stabilize the capsid. Functionally, encapsulates and protects viral dimeric unspliced genomic RNA (gRNA). Binds these RNAs through its zinc fingers. Acts as a nucleic acid chaperone which is involved in rearangement of nucleic acid secondary structure during gRNA retrotranscription. Also facilitates template switch leading to recombination. As part of the polyprotein, participates in gRNA dimerization, packaging, tRNA incorporation and virion assembly. Its function is as follows. Aspartyl protease that mediates proteolytic cleavages of Gag and Gag-Pol polyproteins during or shortly after the release of the virion from the plasma membrane. Cleavages take place as an ordered, step-wise cascade to yield mature proteins. This process is called maturation. Displays maximal activity during the budding process just prior to particle release from the cell. Also cleaves Nef and Vif, probably concomitantly with viral structural proteins on maturation of virus particles. Hydrolyzes host EIF4GI and PABP1 in order to shut off the capped cellular mRNA translation. The resulting inhibition of cellular protein synthesis serves to ensure maximal viral gene expression and to evade host immune response. Also mediates cleavage of host YTHDF3. Mediates cleavage of host CARD8, thereby activating the CARD8 inflammasome, leading to the clearance of latent HIV-1 in patient CD4(+) T-cells after viral reactivation; in contrast, HIV-1 can evade CARD8-sensing when its protease remains inactive in infected cells prior to viral budding. Multifunctional enzyme that converts the viral RNA genome into dsDNA in the cytoplasm, shortly after virus entry into the cell. This enzyme displays a DNA polymerase activity that can copy either DNA or RNA templates, and a ribonuclease H (RNase H) activity that cleaves the RNA strand of RNA-DNA heteroduplexes in a partially processive 3' to 5' endonucleasic mode. Conversion of viral genomic RNA into dsDNA requires many steps. A tRNA(3)-Lys binds to the primer-binding site (PBS) situated at the 5'-end of the viral RNA. RT uses the 3' end of the tRNA primer to perform a short round of RNA-dependent minus-strand DNA synthesis. The reading proceeds through the U5 region and ends after the repeated (R) region which is present at both ends of viral RNA. The portion of the RNA-DNA heteroduplex is digested by the RNase H, resulting in a ssDNA product attached to the tRNA primer. This ssDNA/tRNA hybridizes with the identical R region situated at the 3' end of viral RNA. This template exchange, known as minus-strand DNA strong stop transfer, can be either intra- or intermolecular. RT uses the 3' end of this newly synthesized short ssDNA to perform the RNA-dependent minus-strand DNA synthesis of the whole template. RNase H digests the RNA template except for two polypurine tracts (PPTs) situated at the 5'-end and near the center of the genome. It is not clear if both polymerase and RNase H activities are simultaneous. RNase H probably can proceed both in a polymerase-dependent (RNA cut into small fragments by the same RT performing DNA synthesis) and a polymerase-independent mode (cleavage of remaining RNA fragments by free RTs). Secondly, RT performs DNA-directed plus-strand DNA synthesis using the PPTs that have not been removed by RNase H as primers. PPTs and tRNA primers are then removed by RNase H. The 3' and 5' ssDNA PBS regions hybridize to form a circular dsDNA intermediate. Strand displacement synthesis by RT to the PBS and PPT ends produces a blunt ended, linear dsDNA copy of the viral genome that includes long terminal repeats (LTRs) at both ends. In terms of biological role, catalyzes viral DNA integration into the host chromosome, by performing a series of DNA cutting and joining reactions. This enzyme activity takes place after virion entry into a cell and reverse transcription of the RNA genome in dsDNA. The first step in the integration process is 3' processing. This step requires a complex comprising the viral genome, matrix protein, Vpr and integrase. This complex is called the pre-integration complex (PIC). The integrase protein removes 2 nucleotides from each 3' end of the viral DNA, leaving recessed CA OH's at the 3' ends. In the second step, the PIC enters cell nucleus. This process is mediated through integrase and Vpr proteins, and allows the virus to infect a non dividing cell. This ability to enter the nucleus is specific of lentiviruses, other retroviruses cannot and rely on cell division to access cell chromosomes. In the third step, termed strand transfer, the integrase protein joins the previously processed 3' ends to the 5' ends of strands of target cellular DNA at the site of integration. The 5'-ends are produced by integrase-catalyzed staggered cuts, 5 bp apart. A Y-shaped, gapped, recombination intermediate results, with the 5'-ends of the viral DNA strands and the 3' ends of target DNA strands remaining unjoined, flanking a gap of 5 bp. The last step is viral DNA integration into host chromosome. This involves host DNA repair synthesis in which the 5 bp gaps between the unjoined strands are filled in and then ligated. Since this process occurs at both cuts flanking the HIV genome, a 5 bp duplication of host DNA is produced at the ends of HIV-1 integration. Alternatively, Integrase may catalyze the excision of viral DNA just after strand transfer, this is termed disintegration. The chain is Gag-Pol polyprotein (gag-pol) from Human immunodeficiency virus type 1 group M subtype B (isolate RF/HAT3) (HIV-1).